A 201-amino-acid chain; its full sequence is UPF0177 protein YajF (201 aa).

5 helical membrane passes run 10–30, 44–64, 82–102, 119–139, and 159–179; these read TVIL…YVEY, ITVN…MLGI, ILIL…SQFI, VMGS…APIL, and FVFS…VFLI.

This sequence belongs to the UPF0177 family.

It is found in the cell membrane. The chain is UPF0177 protein YajF (yajF) from Lactococcus lactis subsp. lactis (strain IL1403) (Streptococcus lactis).